A 239-amino-acid chain; its full sequence is Putative transcriptional regulator of 2-aminoethylphosphonate degradation operons (239 aa).

Positions 8–76 (IPQYLLIKAQ…DRRGWFVTPE (69 aa)) constitute an HTH gntR-type domain. Residues 36 to 55 (ERELCAIFNTTRITIRESLA) constitute a DNA-binding region (H-T-H motif).

The chain is Putative transcriptional regulator of 2-aminoethylphosphonate degradation operons (phnR) from Salmonella typhi.